A 1077-amino-acid polypeptide reads, in one-letter code: RNA polymerase-associated protein CTR9 (1077 aa).

16 TPR repeats span residues 56 to 89, 138 to 174, 183 to 216, 218 to 251, 298 to 332, 338 to 371, 373 to 405, 421 to 455, 462 to 495, 501 to 534, 540 to 572, 664 to 697, 699 to 731, 732 to 764, 768 to 801, and 830 to 863; these read KEHW…FQNS, IGNM…EDHR, CLFL…NPVL, PDPR…NPKN, PVLL…SPMI, SESS…NEDN, LAKL…NESL, FDAK…TLAT, SRAY…MEFI, LEVL…VSDK, ITLE…HPAY, GKKS…DPFN, FAAQ…LDNE, DVQL…FDNE, PHIL…AKTA, and AETL…FREL. Positions 959–980 are enriched in basic and acidic residues; it reads EREAMAISEHNVKDDSDLSDKD. Residues 959 to 1077 form a disordered region; that stretch reads EREAMAISEH…NDNDDNDGLF (119 aa). Ser1015 and Ser1017 each carry phosphoserine. Acidic residues-rich tracts occupy residues 1042–1051 and 1063–1077; these read FIEDSDEEEA and DNDE…DGLF.

As to quaternary structure, component of the PAF1 complex which consists of at least CDC73, CTR9, LEO1, PAF1 and RTF1. Interacts with SPT6. Interacts with FACT subunits POB3 and SPT16.

Its subcellular location is the nucleus. It is found in the nucleoplasm. In terms of biological role, the PAF1 complex is a multifunctional complex. Involved in transcription initiation via genetic interactions with TATA-binding proteins. Involved in elongation. It regulates 3'-end formation of snR47 by modulating the recruitment or stable association of NRD1 and NAB3 with RNA polymerase II. Also has a role in transcription-coupled histone modification. Required for activation of RAD6 ubiquitin conjugate and the BRE1 ubiquitin ligase which ubiquitinate 'Lys-126' histone H2B. Activates the SET1 histone methyltransferase complex for methylation of 'Lys-4' of histone H3 and for methylation of 'Lys-73' of histone H3 by DOT1 and 'Lys-36' of histone H3 by SET2. In complex with PAF1, required for normal CLN1 and CLN2 G1 cyclin expression in late G1. Also has a role in chromosome segregation where it appears to be involved in microtubule placement. The protein is RNA polymerase-associated protein CTR9 (CTR9) of Saccharomyces cerevisiae (strain ATCC 204508 / S288c) (Baker's yeast).